Consider the following 81-residue polypeptide: Escargot/snail protein homolog (81 aa).

C2H2-type zinc fingers lie at residues 1–5, 17–39, 43–65, and 71–81; these read HQQFH, FSCK…IRTH, CKCH…IRTH, and FSCQHCNRAFA.

This sequence belongs to the snail C2H2-type zinc-finger protein family.

It localises to the nucleus. The sequence is that of Escargot/snail protein homolog from Apis mellifera (Honeybee).